A 417-amino-acid polypeptide reads, in one-letter code: DnaJ protein homolog ANJ1 (417 aa).

A J domain is found at 11-76; the sequence is STRYYEILGV…REIYDQYGED (66 aa). The CR-type zinc-finger motif lies at 135–219; that stretch reads GTTKKLSLSR…CKGEKVVQEK (85 aa). CXXCXGXG motif repeat units lie at residues 148-155, 164-171, and 191-198; these read CSKCTGKG, CSGCQGTG, and CNECKGTG. The stretch at 207–214 is one CXXCXGXG motif; approximate repeat; sequence CPQCKGEK. The disordered stretch occupies residues 384-417; it reads IEEEMKRKQTQAQQEAYDEDDEPAGGQRVQCAQQ. The residue at position 414 (Cys-414) is a Cysteine methyl ester. Cys-414 carries S-farnesyl cysteine lipidation. The propeptide at 415–417 is removed in mature form; that stretch reads AQQ.

The protein localises to the membrane. Plays a continuous role in plant development probably in the structural organization of compartments. This Atriplex nummularia (Old man saltbush) protein is DnaJ protein homolog ANJ1.